Consider the following 706-residue polypeptide: Catalase HPII (706 aa).

Catalysis depends on residues H77 and N151. Residue Y365 coordinates heme. The disordered stretch occupies residues 512 to 532 (EPPEEQVDESAPVSPALSQVT).

This sequence belongs to the catalase family. HPII subfamily. Heme is required as a cofactor.

The protein resides in the cytoplasm. It carries out the reaction 2 H2O2 = O2 + 2 H2O. In terms of biological role, decomposes hydrogen peroxide into water and oxygen; serves to protect cells from the toxic effects of hydrogen peroxide. In Mycobacterium avium, this protein is Catalase HPII (katE).